Here is a 444-residue protein sequence, read N- to C-terminus: Tubulin gamma chain (444 aa).

A GTP-binding site is contributed by 144-150 (SGGTGSG).

Belongs to the tubulin family.

Its subcellular location is the cytoplasm. It localises to the cytoskeleton. It is found in the microtubule organizing center. The protein resides in the centrosome. The protein localises to the cell junction. Its subcellular location is the hemidesmosome. It localises to the adherens junction. Its function is as follows. Tubulin is the major constituent of microtubules. The gamma chain is found at microtubule organizing centers (MTOC) such as the spindle poles or the centrosome, suggesting that it is involved in the minus-end nucleation of microtubule assembly. The polypeptide is Tubulin gamma chain (tbg-1) (Caenorhabditis elegans).